We begin with the raw amino-acid sequence, 208 residues long: Microcin J25-processing protein McjB (208 aa).

It is found in the cytoplasm. Along with McjC, necessary and sufficient to process the inactive microcin J25 (McjA) precursor into the active peptide. This is Microcin J25-processing protein McjB (mcjB) from Escherichia coli.